Reading from the N-terminus, the 383-residue chain is Thioredoxin reductase 2 (383 aa).

Residues 66–69 (SGPA), 87–88 (FE), 95–100 (IAPGGQ), asparagine 109, valine 142, cysteine 200, aspartate 345, and 352–354 (RQA) contribute to the FAD site. A disulfide bridge links cysteine 197 with cysteine 200.

The protein belongs to the class-II pyridine nucleotide-disulfide oxidoreductase family. As to quaternary structure, homodimer. It depends on FAD as a cofactor.

It localises to the cytoplasm. The protein resides in the mitochondrion matrix. The enzyme catalyses [thioredoxin]-dithiol + NADP(+) = [thioredoxin]-disulfide + NADPH + H(+). Possesses thioredoxin-disulfide reductase activity towards thioredoxins O1, O2 and F3. The polypeptide is Thioredoxin reductase 2 (NTR2) (Arabidopsis thaliana (Mouse-ear cress)).